The primary structure comprises 273 residues: Bis(5'-nucleosyl)-tetraphosphatase, symmetrical (273 aa).

It belongs to the Ap4A hydrolase family.

It carries out the reaction P(1),P(4)-bis(5'-adenosyl) tetraphosphate + H2O = 2 ADP + 2 H(+). Hydrolyzes diadenosine 5',5'''-P1,P4-tetraphosphate to yield ADP. The chain is Bis(5'-nucleosyl)-tetraphosphatase, symmetrical from Aeromonas hydrophila subsp. hydrophila (strain ATCC 7966 / DSM 30187 / BCRC 13018 / CCUG 14551 / JCM 1027 / KCTC 2358 / NCIMB 9240 / NCTC 8049).